A 288-amino-acid chain; its full sequence is Light-independent protochlorophyllide reductase iron-sulfur ATP-binding protein (288 aa).

Residues 12–17 and K41 each bind ATP; that span reads GIGKST. S16 provides a ligand contact to Mg(2+). Positions 97 and 131 each coordinate [4Fe-4S] cluster. 182-183 lines the ATP pocket; it reads NR.

This sequence belongs to the NifH/BchL/ChlL family. In terms of assembly, homodimer. Protochlorophyllide reductase is composed of three subunits; ChlL, ChlN and ChlB. The cofactor is [4Fe-4S] cluster.

It carries out the reaction chlorophyllide a + oxidized 2[4Fe-4S]-[ferredoxin] + 2 ADP + 2 phosphate = protochlorophyllide a + reduced 2[4Fe-4S]-[ferredoxin] + 2 ATP + 2 H2O. It participates in porphyrin-containing compound metabolism; chlorophyll biosynthesis (light-independent). In terms of biological role, component of the dark-operative protochlorophyllide reductase (DPOR) that uses Mg-ATP and reduced ferredoxin to reduce ring D of protochlorophyllide (Pchlide) to form chlorophyllide a (Chlide). This reaction is light-independent. The L component serves as a unique electron donor to the NB-component of the complex, and binds Mg-ATP. The sequence is that of Light-independent protochlorophyllide reductase iron-sulfur ATP-binding protein from Picosynechococcus sp. (strain ATCC 27264 / PCC 7002 / PR-6) (Agmenellum quadruplicatum).